The chain runs to 692 residues: Elongation factor G (692 aa).

A tr-type G domain is found at 8–282 (ENTRNIGIMA…AVIDYLPSPL (275 aa)). GTP is bound by residues 17–24 (AHIDAGKT), 81–85 (DTPGH), and 135–138 (NKMD).

It belongs to the TRAFAC class translation factor GTPase superfamily. Classic translation factor GTPase family. EF-G/EF-2 subfamily.

It is found in the cytoplasm. Functionally, catalyzes the GTP-dependent ribosomal translocation step during translation elongation. During this step, the ribosome changes from the pre-translocational (PRE) to the post-translocational (POST) state as the newly formed A-site-bound peptidyl-tRNA and P-site-bound deacylated tRNA move to the P and E sites, respectively. Catalyzes the coordinated movement of the two tRNA molecules, the mRNA and conformational changes in the ribosome. The sequence is that of Elongation factor G from Bacillus thuringiensis subsp. konkukian (strain 97-27).